The sequence spans 142 residues: Large ribosomal subunit protein uL13 (142 aa).

The protein belongs to the universal ribosomal protein uL13 family. Part of the 50S ribosomal subunit.

In terms of biological role, this protein is one of the early assembly proteins of the 50S ribosomal subunit, although it is not seen to bind rRNA by itself. It is important during the early stages of 50S assembly. The chain is Large ribosomal subunit protein uL13 from Azotobacter vinelandii (strain DJ / ATCC BAA-1303).